The primary structure comprises 319 residues: ATP-dependent 6-phosphofructokinase (319 aa).

ATP is bound at residue Gly11. Position 21 to 25 (Arg21 to Arg25) interacts with ADP. ATP is bound by residues Arg72–Phe73 and Gly102–Ser105. Mg(2+) is bound at residue Asp103. Ser125 to Asp127 lines the substrate pocket. Catalysis depends on Asp127, which acts as the Proton acceptor. Arg154 is an ADP binding site. Substrate contacts are provided by residues Arg162 and Met169 to Arg171. ADP is bound by residues Gly185–Asp187 and Lys213–His215. Substrate is bound by residues Glu222, Arg243, and His249–Arg252.

It belongs to the phosphofructokinase type A (PFKA) family. ATP-dependent PFK group I subfamily. Prokaryotic clade 'B1' sub-subfamily. As to quaternary structure, homotetramer. Mg(2+) is required as a cofactor.

It localises to the cytoplasm. The enzyme catalyses beta-D-fructose 6-phosphate + ATP = beta-D-fructose 1,6-bisphosphate + ADP + H(+). It functions in the pathway carbohydrate degradation; glycolysis; D-glyceraldehyde 3-phosphate and glycerone phosphate from D-glucose: step 3/4. Its activity is regulated as follows. Allosterically activated by ADP and other diphosphonucleosides, and allosterically inhibited by phosphoenolpyruvate. Functionally, catalyzes the phosphorylation of D-fructose 6-phosphate to fructose 1,6-bisphosphate by ATP, the first committing step of glycolysis. The polypeptide is ATP-dependent 6-phosphofructokinase (Lactobacillus gasseri (strain ATCC 33323 / DSM 20243 / BCRC 14619 / CIP 102991 / JCM 1131 / KCTC 3163 / NCIMB 11718 / NCTC 13722 / AM63)).